Here is a 464-residue protein sequence, read N- to C-terminus: Mitogen-activated protein kinase 10 (464 aa).

The region spanning 64–359 (YQNLKPIGSG…VDDALQHPYI (296 aa)) is the Protein kinase domain. Residues 70–78 (IGSGAQGIV) and Lys93 contribute to the ATP site. Asp189 serves as the catalytic Proton acceptor. Thr221 carries the phosphothreonine; by MAP2K7 modification. Positions 221–223 (TPY) match the TXY motif. Position 223 is a phosphotyrosine; by MAP2K4 (Tyr223). The tract at residues 405-464 (TKNGVVKGQPSPSGAAVNSSESLPPSSSVNDISSMSTDQTLASDTDSSLEASAGPLGCCR) is disordered. Positions 423-432 (SSESLPPSSS) are enriched in low complexity. A compositionally biased stretch (polar residues) spans 433 to 454 (VNDISSMSTDQTLASDTDSSLE). 2 S-palmitoyl cysteine lipidation sites follow: Cys462 and Cys463.

This sequence belongs to the protein kinase superfamily. CMGC Ser/Thr protein kinase family. MAP kinase subfamily. As to quaternary structure, interacts with MAPKBP1. Interacts with MAPK8IP1/JIP-1 and MAPK8IP3/JIP-3/JSAP1. Interacts with SPAG9/MAPK8IP4/JIP4. Interacts with HDAC9. Interacts with ARRB2; the interaction enhances MAPK10 activation by MAP3K5. Interacts with SARM1. Interacts with JUND; interaction is inhibited in the presence of MEN1. Requires Mg(2+) as cofactor. Dually phosphorylated on Thr-221 and Tyr-223 by MAP2K4 and MAP2K7, which activates the enzyme. MAP2K7 shows a strong preference for Thr-221 while MAP2K4 phosphorylates Tyr-223 preferentially. Weakly autophosphorylated on threonine and tyrosine residues in vitro. In terms of processing, palmitoylation regulates subcellular location and axonal development. Specific to a subset of neurons in the nervous system. Present in the hippocampus and areas, cerebellum, striatum, brain stem, and weakly in the spinal cord. Very weak expression in testis and kidney.

It is found in the cytoplasm. It localises to the membrane. Its subcellular location is the nucleus. The protein resides in the mitochondrion. It catalyses the reaction L-seryl-[protein] + ATP = O-phospho-L-seryl-[protein] + ADP + H(+). The catalysed reaction is L-threonyl-[protein] + ATP = O-phospho-L-threonyl-[protein] + ADP + H(+). Activated by threonine and tyrosine phosphorylation by two dual specificity kinases, MAP2K4 and MAP2K7. MAP2K7 phosphorylates MAPK10 on Thr-221 causing a conformational change and a large increase in Vmax. MAP2K4 then phosphorylates Tyr-223 resulting in a further increase in Vmax. Inhibited by dual specificity phosphatases, such as DUSP1. Inhibited by HDAC9. Its function is as follows. Serine/threonine-protein kinase involved in various processes such as neuronal proliferation, differentiation, migration and programmed cell death. Extracellular stimuli such as pro-inflammatory cytokines or physical stress stimulate the stress-activated protein kinase/c-Jun N-terminal kinase (SAP/JNK) signaling pathway. In this cascade, two dual specificity kinases MAP2K4/MKK4 and MAP2K7/MKK7 phosphorylate and activate MAPK10/JNK3. In turn, MAPK10/JNK3 phosphorylates a number of transcription factors, primarily components of AP-1 such as JUN and ATF2 and thus regulates AP-1 transcriptional activity. Plays regulatory roles in the signaling pathways during neuronal apoptosis. Phosphorylates the neuronal microtubule regulator STMN2. Acts in the regulation of the amyloid-beta precursor protein/APP signaling during neuronal differentiation by phosphorylating APP. Also participates in neurite growth in spiral ganglion neurons. Phosphorylates the CLOCK-BMAL1 heterodimer and plays a role in the photic regulation of the circadian clock. Phosphorylates JUND and this phosphorylation is inhibited in the presence of MEN1. This Homo sapiens (Human) protein is Mitogen-activated protein kinase 10 (MAPK10).